The chain runs to 477 residues: MKILFVAAEGAPFSKTGGLGDVIGALPKSLVKAGHEVAVILPYYDMVEAKFGSQIEDVLHFEVSVGWRRQYCGIKKTVLNGVTFYFIDNQYYFFRGHVYGDFDDGERFAFFQLAAIEAMERIDFIPDLLHVHDYHTAMIPFLLKEKYRWIQAYEDIETVLTIHNLEFQGQFSEGMLGDLFGVGFERYADGTLRWNNCLNWMKAGILYANRVSTVSPSYAHEIMTSQFGCNLDQILKMESGKVSGIVNGIDADLYNPQTDALLDYHFNQEDLSGKAKNKAKLQERVGLPVRADVPLVGIVSRLTRQKGFDVVVESLHHILQEDVQIVLLGTGDPAFEGAFSWFAQIYPDKLSTNITFDVKLAQEIYAACDLFLMPSRFEPCGLSQMMAMRYGTLPLVHEVGGLRDTVRAFNPIEGSGTGFSFDNLSPYWLNWTFQTALDLYRNHPDIWRNLQKQAMESDFSWDTACKSYLDLYHSLVN.

Residue Lys-15 coordinates ADP-alpha-D-glucose.

It belongs to the glycosyltransferase 1 family. Bacterial/plant glycogen synthase subfamily.

It carries out the reaction [(1-&gt;4)-alpha-D-glucosyl](n) + ADP-alpha-D-glucose = [(1-&gt;4)-alpha-D-glucosyl](n+1) + ADP + H(+). Its pathway is glycan biosynthesis; glycogen biosynthesis. Functionally, synthesizes alpha-1,4-glucan chains using ADP-glucose. The sequence is that of Glycogen synthase from Streptococcus pneumoniae (strain 70585).